Here is a 101-residue protein sequence, read N- to C-terminus: Small ribosomal subunit protein uS14 (101 aa).

It belongs to the universal ribosomal protein uS14 family. In terms of assembly, part of the 30S ribosomal subunit. Contacts proteins S3 and S10.

Its function is as follows. Binds 16S rRNA, required for the assembly of 30S particles and may also be responsible for determining the conformation of the 16S rRNA at the A site. This chain is Small ribosomal subunit protein uS14, found in Shewanella denitrificans (strain OS217 / ATCC BAA-1090 / DSM 15013).